We begin with the raw amino-acid sequence, 925 residues long: NADH:fumarate oxidoreductase (925 aa).

Threonine 447 carries the post-translational modification FMN phosphoryl threonine. Alanine 492, glutamate 511, asparagine 519, threonine 520, alanine 525, glycine 526, and valine 633 together coordinate FAD. Alanine 525 contacts fumarate. Residue alanine 525 participates in succinate binding. The succinate site is built by histidine 719, serine 731, and glutamate 732. The fumarate site is built by serine 731 and glutamate 732. Residue arginine 756 is the Proton donor of the active site. Histidine 859 serves as a coordination point for fumarate. Histidine 859 is a binding site for succinate. Positions 860 and 889 each coordinate FAD. Fumarate-binding residues include arginine 899 and glycine 902. Succinate contacts are provided by arginine 899 and glycine 902. Positions 904 and 905 each coordinate FAD.

This sequence belongs to the FAD-dependent oxidoreductase 2 family. FRD/SDH subfamily. As to quaternary structure, monomer. The cofactor is FAD. FMN is required as a cofactor. In terms of processing, is flavinylated on Thr-447 by ApbE2, encoded in a neighboring gene. Flavinylation is essential for catalytic activity.

Its subcellular location is the cytoplasm. It catalyses the reaction succinate + NAD(+) = fumarate + NADH + H(+). Functionally, catalyzes the anaerobic reduction of fumarate to succinate. Uses NADH as the inherent electron donor in this process. Is involved in anaerobic fumarate respiration in K.pneumoniae. In Klebsiella pneumoniae (strain 342), this protein is NADH:fumarate oxidoreductase.